The primary structure comprises 468 residues: ERO1-like protein alpha (468 aa).

A signal peptide spans 1-23; it reads MGRGWGFLFGLLGAVWLLSSGHG. Intrachain disulfides connect Cys35–Cys48, Cys37–Cys46, Cys85–Cys391, Cys94–Cys99, Cys94–Cys131, Cys99–Cys104, Cys208–Cys241, and Cys394–Cys397. Residues Ser106 and Ser143 each carry the phosphoserine modification. Position 145 is a phosphoserine; by FAM20C (Ser145). 3 residues coordinate FAD: Arg187, Thr189, and Trp200. FAD contacts are provided by Ser252 and His255. A glycan (N-linked (GlcNAc...) asparagine) is linked at Asn280. Residues Arg287 and Arg300 each coordinate FAD. N-linked (GlcNAc...) asparagine glycosylation is present at Asn384.

Belongs to the EROs family. As to quaternary structure, predominantly monomer. May function both as a monomer and a homodimer. Interacts with PDILT. Interacts with ERP44; the interaction results in retention of ERO1A in the endoplasmic reticulum. FAD is required as a cofactor. In terms of processing, N-glycosylated. The Cys-94/Cys-99 and Cys-394/Cys-397 disulfide bonds constitute the redox-active center. The Cys-94/Cys-99 disulfide bond may accept electron from P4HB and funnel them to the active site disulfide Cys-394/Cys-397. The regulatory Cys-99/Cys-104 disulfide bond stabilizes the other regulatory bond Cys-94/Cys-131. Post-translationally, phosphorylated on Ser-145 by FAM20C in the Golgi which increases its enzymatic activity. Phosphorylation is induced by lactation. It is also induced by hypoxia and reductive stress. Widely expressed at low level. Expressed at high level in upper digestive tract. Highly expressed in esophagus. Weakly expressed in stomach and duodenum.

It localises to the endoplasmic reticulum membrane. It is found in the golgi apparatus lumen. The protein resides in the secreted. Its subcellular location is the cell projection. The protein localises to the dendrite. Its activity is regulated as follows. Enzyme activity is tightly regulated to prevent the accumulation of reactive oxygen species in the endoplasmic reticulum. Reversibly down-regulated by the formation of disulfide bonds between the active site Cys-94 and Cys-131, and between Cys-99 and Cys-104. Glutathione may be required to regulate its activity in the endoplasmic reticulum. Its function is as follows. Oxidoreductase involved in disulfide bond formation in the endoplasmic reticulum. Efficiently reoxidizes P4HB/PDI, the enzyme catalyzing protein disulfide formation, in order to allow P4HB to sustain additional rounds of disulfide formation. Following P4HB reoxidation, passes its electrons to molecular oxygen via FAD, leading to the production of reactive oxygen species (ROS) in the cell. Required for the proper folding of immunoglobulins. Plays an important role in ER stress-induced, CHOP-dependent apoptosis by activating the inositol 1,4,5-trisphosphate receptor IP3R1. Involved in the release of the unfolded cholera toxin from reduced P4HB/PDI in case of infection by V.cholerae, thereby playing a role in retrotranslocation of the toxin. The chain is ERO1-like protein alpha from Homo sapiens (Human).